The sequence spans 473 residues: Cucurbitadienol 11-hydroxylase (473 aa).

The chain crosses the membrane as a helical span at residues 4–24; that stretch reads VVLGLATLFVAYYIHWINKWR. Residue C422 participates in heme binding.

The protein belongs to the cytochrome P450 family. Heme is required as a cofactor. Highly expressed in young fruits 15 days after anthesis (15-DAA). Also observed in roots.

It is found in the membrane. It carries out the reaction cucurbitadienol + 2 reduced [NADPH--hemoprotein reductase] + 2 O2 = 11-oxocucurbitadienol + 2 oxidized [NADPH--hemoprotein reductase] + 3 H2O + 2 H(+). It catalyses the reaction cucurbitadienol + reduced [NADPH--hemoprotein reductase] + O2 = 11-hydroxycucurbitadienol + oxidized [NADPH--hemoprotein reductase] + H2O + H(+). The catalysed reaction is 11-hydroxycucurbitadienol + reduced [NADPH--hemoprotein reductase] + O2 = 11-oxocucurbitadienol + oxidized [NADPH--hemoprotein reductase] + 2 H2O + H(+). The enzyme catalyses (24R)-24,25-dihydroxycucurbitadienol + reduced [NADPH--hemoprotein reductase] + O2 = mogrol + oxidized [NADPH--hemoprotein reductase] + H2O + H(+). Its pathway is secondary metabolite biosynthesis; terpenoid biosynthesis. Functionally, hydroxylase involved in the biosynthesis of cucurbitacin and mogroside tetracyclic triterpene natural products (e.g. siamenoside I and mogrosides IV, V and VI). Cucurbitacins have cytotoxic properties and exhibit deterrent taste as a defense barrier against herbivores. Mogrosides are nonsugar highly oxygenated compounds used as high-intensity zero-calorie sweeteners; they also possess pharmacological properties such as regulating immunity, lowering blood sugar and lipid levels, protecting the liver, and acting as antioxidants and antitumor agents. Catalyzes the oxidation of cucurbitadienol at the C-11 position to produce 11-oxocucurbitadienol, a possible biosynthetic intermediate from cucurbitadienol to mogrol. Also mediates the conversion of 24,25-dihydroxycucurbitadienol to mogrol. This is Cucurbitadienol 11-hydroxylase from Siraitia grosvenorii (Monk's fruit).